The following is a 472-amino-acid chain: Forkhead box protein H1 (472 aa).

The segment at 36–56 (SSKRSCHRSSNPLLELGGRLD) is disordered. Residues 97–193 (KPPYSYLAMI…LKRQNTAVSR (97 aa)) constitute a DNA-binding region (fork-head). Disordered regions lie at residues 211 to 246 (YSQP…RPKL) and 261 to 360 (PASS…LPTS). The segment covering 219-239 (PLPPESSLPPVPTRQSPPPSE) has biased composition (pro residues). Over residues 294–310 (ASYNGSSSASSVSPASD) the composition is skewed to low complexity. The segment at 339–465 (SCPPPNKSSK…PNQYALQNGP (127 aa)) is SMAD-interaction domain (SID). The short motif at 357-361 (LPTSY) is the Fast/FoxH1 motif 1 (FM1) element. Residues 367 to 373 (PNAVAPP) carry the Fast/FoxH1 motif 2 (FM2) motif. An SMAD interaction motif (SIM) motif is present at residues 428 to 448 (LDSMLQSVPPNKSVFDALGSN).

It localises to the nucleus. Its function is as follows. Transcriptional activator. Activates an activin response element (ARE). Recognizes and binds to the DNA sequence 5'-TGT[GT][GT]ATT-3'. Modulator of nodal signaling required for organizer formation. Also required for the development of dorsal axial structures and left-right symmetry. The protein is Forkhead box protein H1 (foxh1) of Danio rerio (Zebrafish).